The primary structure comprises 105 residues: Nucleoid-associated protein OCAR_7544/OCA5_c05960 (105 aa).

This sequence belongs to the YbaB/EbfC family. Homodimer.

It localises to the cytoplasm. The protein resides in the nucleoid. In terms of biological role, binds to DNA and alters its conformation. May be involved in regulation of gene expression, nucleoid organization and DNA protection. This Afipia carboxidovorans (strain ATCC 49405 / DSM 1227 / KCTC 32145 / OM5) (Oligotropha carboxidovorans) protein is Nucleoid-associated protein OCAR_7544/OCA5_c05960.